The primary structure comprises 149 residues: Transcriptional repressor NrdR (149 aa).

The segment at 3–34 is a zinc-finger region; it reads CPFCGANDTKVIDSRLVADGHQVRRRRQCLAC. Positions 49–139 constitute an ATP-cone domain; sequence PRVIKTDGNR…VYRSFEDIRE (91 aa).

It belongs to the NrdR family. Zn(2+) serves as cofactor.

Functionally, negatively regulates transcription of bacterial ribonucleotide reductase nrd genes and operons by binding to NrdR-boxes. The protein is Transcriptional repressor NrdR of Photobacterium profundum (strain SS9).